The following is a 147-amino-acid chain: 3-dehydroquinate dehydratase (147 aa).

Tyrosine 22 functions as the Proton acceptor in the catalytic mechanism. Asparagine 74, histidine 80, and aspartate 87 together coordinate substrate. Histidine 101 functions as the Proton donor in the catalytic mechanism. Substrate-binding positions include 102 to 103 and arginine 112; that span reads IS.

It belongs to the type-II 3-dehydroquinase family. In terms of assembly, homododecamer.

It carries out the reaction 3-dehydroquinate = 3-dehydroshikimate + H2O. Its pathway is metabolic intermediate biosynthesis; chorismate biosynthesis; chorismate from D-erythrose 4-phosphate and phosphoenolpyruvate: step 3/7. Catalyzes a trans-dehydration via an enolate intermediate. This chain is 3-dehydroquinate dehydratase, found in Lachnospira eligens (strain ATCC 27750 / DSM 3376 / VPI C15-48 / C15-B4) (Eubacterium eligens).